A 282-amino-acid polypeptide reads, in one-letter code: Pantothenate synthetase (282 aa).

30-37 (MGALHQGH) contacts ATP. Catalysis depends on His37, which acts as the Proton donor. Position 61 (Gln61) interacts with (R)-pantoate. Gln61 provides a ligand contact to beta-alanine. 149–152 (GEKD) contacts ATP. Gln155 contributes to the (R)-pantoate binding site. ATP is bound by residues Leu178 and 186–189 (MSSR).

The protein belongs to the pantothenate synthetase family. In terms of assembly, homodimer.

Its subcellular location is the cytoplasm. The enzyme catalyses (R)-pantoate + beta-alanine + ATP = (R)-pantothenate + AMP + diphosphate + H(+). It participates in cofactor biosynthesis; (R)-pantothenate biosynthesis; (R)-pantothenate from (R)-pantoate and beta-alanine: step 1/1. Catalyzes the condensation of pantoate with beta-alanine in an ATP-dependent reaction via a pantoyl-adenylate intermediate. The polypeptide is Pantothenate synthetase (Flavobacterium psychrophilum (strain ATCC 49511 / DSM 21280 / CIP 103535 / JIP02/86)).